The chain runs to 745 residues: Elongation factor G, mitochondrial (745 aa).

The tr-type G domain maps to 40–317 (ERIRNIGISA…AVLDYLPNPG (278 aa)). GTP-binding positions include 49-56 (AHIDSGKT), 116-120 (DTPGH), and 170-173 (NKLD).

This sequence belongs to the TRAFAC class translation factor GTPase superfamily. Classic translation factor GTPase family. EF-G/EF-2 subfamily.

Its subcellular location is the mitochondrion. The protein operates within protein biosynthesis; polypeptide chain elongation. Mitochondrial GTPase that catalyzes the GTP-dependent ribosomal translocation step during translation elongation. During this step, the ribosome changes from the pre-translocational (PRE) to the post-translocational (POST) state as the newly formed A-site-bound peptidyl-tRNA and P-site-bound deacylated tRNA move to the P and E sites, respectively. Catalyzes the coordinated movement of the two tRNA molecules, the mRNA and conformational changes in the ribosome. Essential during development as it acts as a retrograde signal from mitochondria to the nucleus to slow down cell proliferation if mitochondrial energy output is low. The chain is Elongation factor G, mitochondrial from Drosophila sechellia (Fruit fly).